The sequence spans 217 residues: Probable GTP-binding protein EngB (217 aa).

The region spanning 29-213 (GPPEVAFAGR…RQAIAETVGI (185 aa)) is the EngB-type G domain. GTP-binding positions include 37 to 44 (GRSNVGKS), 64 to 68 (GRTQE), 91 to 94 (DMPG), 158 to 161 (TKTD), and 192 to 194 (TSS). Residues serine 44 and threonine 66 each coordinate Mg(2+).

This sequence belongs to the TRAFAC class TrmE-Era-EngA-EngB-Septin-like GTPase superfamily. EngB GTPase family. Mg(2+) serves as cofactor.

Functionally, necessary for normal cell division and for the maintenance of normal septation. The chain is Probable GTP-binding protein EngB from Rhizobium etli (strain ATCC 51251 / DSM 11541 / JCM 21823 / NBRC 15573 / CFN 42).